The chain runs to 271 residues: Undecaprenyl-diphosphatase 2 (271 aa).

Transmembrane regions (helical) follow at residues 1 to 21, 46 to 66, 88 to 108, 111 to 131, 146 to 166, 190 to 210, 220 to 240, and 251 to 271; these read MNFF…LFPI, NFLE…IVYF, ALIV…EQTI, AFSD…LLFF, LKGW…IPGF, SMLL…PKLI, LSLI…YILM, and MLPF…SKAI.

This sequence belongs to the UppP family.

It localises to the cell membrane. The enzyme catalyses di-trans,octa-cis-undecaprenyl diphosphate + H2O = di-trans,octa-cis-undecaprenyl phosphate + phosphate + H(+). Functionally, catalyzes the dephosphorylation of undecaprenyl diphosphate (UPP). Confers resistance to bacitracin. This is Undecaprenyl-diphosphatase 2 from Oenococcus oeni (strain ATCC BAA-331 / PSU-1).